The sequence spans 369 residues: H-2 class I histocompatibility antigen, K-B alpha chain (369 aa).

The first 21 residues, 1–21 (MVPCTLLLLLAAALAPTQTRA), serve as a signal peptide directing secretion. The tract at residues 22–111 (GPHSLRYFVT…LLGYYNQSKG (90 aa)) is alpha-1. At 22–305 (GPHSLRYFVT…EPPPSTVSNM (284 aa)) the chain is on the extracellular side. Asn-107 carries N-linked (GlcNAc...) asparagine glycosylation. The segment at 112–203 (GSHTIQVISG…KNGNATLLRT (92 aa)) is alpha-2. A disulfide bridge links Cys-122 with Cys-185. The N-linked (GlcNAc...) asparagine glycan is linked to Asn-197. The interval 204 to 295 (DSPKAHVTHH…GLPEPLTLRW (92 aa)) is alpha-3. The Ig-like C1-type domain maps to 206-294 (PKAHVTHHSR…QGLPEPLTLR (89 aa)). Cys-224 and Cys-280 are disulfide-bonded. Positions 296 to 305 (EPPPSTVSNM) are connecting peptide. A helical transmembrane segment spans residues 306 to 328 (ATVAVLVVLGAAIVTGAVVAFVM). Topologically, residues 329 to 369 (KMRRRNTGGKGGDYALAPGSQTSDLSLPDCKVMVHDPHSLA) are cytoplasmic. Phosphoserine occurs at positions 351 and 354.

The protein belongs to the MHC class I family. As to quaternary structure, heterodimer of an alpha chain and a beta chain (beta-2-microglobulin).

The protein resides in the membrane. Functionally, involved in the presentation of foreign antigens to the immune system. In Mus musculus (Mouse), this protein is H-2 class I histocompatibility antigen, K-B alpha chain (H2-K1).